Consider the following 517-residue polypeptide: Glutamate--tRNA ligase (517 aa).

The 'HIGH' region motif lies at 10-20 (PSPSGFLHVGG). Cys-107, Cys-109, Cys-134, and Asp-136 together coordinate Zn(2+). Positions 250-254 (KLSKR) match the 'KMSKS' region motif. Lys-253 contacts ATP.

The protein belongs to the class-I aminoacyl-tRNA synthetase family. Glutamate--tRNA ligase type 1 subfamily. Monomer. Requires Zn(2+) as cofactor.

Its subcellular location is the cytoplasm. It carries out the reaction tRNA(Glu) + L-glutamate + ATP = L-glutamyl-tRNA(Glu) + AMP + diphosphate. Functionally, catalyzes the attachment of glutamate to tRNA(Glu) in a two-step reaction: glutamate is first activated by ATP to form Glu-AMP and then transferred to the acceptor end of tRNA(Glu). This chain is Glutamate--tRNA ligase, found in Leptospira biflexa serovar Patoc (strain Patoc 1 / ATCC 23582 / Paris).